The following is a 72-amino-acid chain: Large ribosomal subunit protein bL31c (72 aa).

The protein belongs to the bacterial ribosomal protein bL31 family. Type A subfamily. Part of the 50S ribosomal subunit.

The protein resides in the plastid. It is found in the chloroplast. Functionally, binds the 23S rRNA. In Guillardia theta (Cryptophyte), this protein is Large ribosomal subunit protein bL31c.